The following is a 191-amino-acid chain: Leucyl/phenylalanyl-tRNA--protein transferase (191 aa).

It belongs to the L/F-transferase family.

The protein resides in the cytoplasm. The enzyme catalyses N-terminal L-lysyl-[protein] + L-leucyl-tRNA(Leu) = N-terminal L-leucyl-L-lysyl-[protein] + tRNA(Leu) + H(+). It catalyses the reaction N-terminal L-arginyl-[protein] + L-leucyl-tRNA(Leu) = N-terminal L-leucyl-L-arginyl-[protein] + tRNA(Leu) + H(+). The catalysed reaction is L-phenylalanyl-tRNA(Phe) + an N-terminal L-alpha-aminoacyl-[protein] = an N-terminal L-phenylalanyl-L-alpha-aminoacyl-[protein] + tRNA(Phe). Its function is as follows. Functions in the N-end rule pathway of protein degradation where it conjugates Leu, Phe and, less efficiently, Met from aminoacyl-tRNAs to the N-termini of proteins containing an N-terminal arginine or lysine. This is Leucyl/phenylalanyl-tRNA--protein transferase from Rubrobacter xylanophilus (strain DSM 9941 / JCM 11954 / NBRC 16129 / PRD-1).